A 712-amino-acid chain; its full sequence is Voltage-gated chloride channel TMC4 (712 aa).

Residues 1–39 (MEENPTLESEAWGSSRGWLAPREARGAPCSSPGPSLSSV) form a disordered region. At 1 to 168 (MEENPTLESE…GTESYFSLLR (168 aa)) the chain is on the extracellular side. An N-linked (GlcNAc...) asparagine glycan is attached at Asn-107. A helical membrane pass occupies residues 169–189 (FLLLLNVLASVLMACMTLLPT). The Cytoplasmic portion of the chain corresponds to 190-249 (WLGGAPPGPPGPDISSPCGSYNPHSQGLVTFATQLFNLLSGEGYLEWSPLFYGFYPPRPR). A helical membrane pass occupies residues 250–270 (LAVTYLCWAFAVGLICLLLIL). At 271–348 (HRSVSGLKQT…GQQARVWLVR (78 aa)) the chain is on the extracellular side. A helical membrane pass occupies residues 349–369 (VLLNLLVVALLGAAFYGVYWA). Residues 370-394 (TGCTVELQEMPLVQELPLLKLGVNY) are Cytoplasmic-facing. A helical transmembrane segment spans residues 395–415 (LPSIFIAGVNFVLPPVFKLIA). At 416–425 (PLEGYTRSRQ) the chain is on the extracellular side. The chain crosses the membrane as a helical span at residues 426–446 (IVFILLRTVFLRLASLVVLLF). At 447 to 483 (SLWNQITCGGDSEAEDCKTCGYNYKQLPCWETVLGQE) the chain is on the cytoplasmic side. Residues 484–504 (MYKLLLFDLLTVLAVALLIQF) traverse the membrane as a helical segment. Topologically, residues 505–542 (PRKLLCGLCPGALGRLAGTQEFQVPDEVLGLIYAQTVV) are extracellular. The helical transmembrane segment at 543 to 565 (WVGSFFCPLLPLLNTVKFLLLFY) threads the bilayer. At 566-592 (LKKLTLFSTCSPAARTFRASAANFFFP) the chain is on the cytoplasmic side. Residues 593-613 (LVLLLGLAISSVPLLYSIFLI) traverse the membrane as a helical segment. The Extracellular segment spans residues 614 to 654 (PPSKLCGPFRGQSSIWAQIPESISSLPETTQNFLFFLGTQA). The chain crosses the membrane as a helical span at residues 655-677 (FAVPLLLISSILMAYTVALANSY). The Cytoplasmic segment spans residues 678 to 712 (GRLISELKRQRQTEAQNKVFLARRAVALTSTKPAL).

The protein belongs to the TMC family.

The protein resides in the membrane. It catalyses the reaction chloride(in) = chloride(out). In terms of biological role, voltage-gated chloride channel involved in high-concentration salt taste sensation. Depolarization induced by high NaCl concentration may trigger the activation of TMC4-mediated chloride influx into taste bud cells, helping the return to resting potential. Also allows permeation of organic anions including gluconate, but their current amplitudes at positive potentials are less than that of chloride. Involved in pH and temperature-dependent modulation of salty taste. This Homo sapiens (Human) protein is Voltage-gated chloride channel TMC4.